The sequence spans 105 residues: Large ribosomal subunit protein eL36 (105 aa).

The protein belongs to the eukaryotic ribosomal protein eL36 family. Component of the large ribosomal subunit.

It localises to the cytoplasm. It is found in the cytosol. In terms of biological role, component of the large ribosomal subunit. The ribosome is a large ribonucleoprotein complex responsible for the synthesis of proteins in the cell. The chain is Large ribosomal subunit protein eL36 (rpl36) from Xenopus laevis (African clawed frog).